We begin with the raw amino-acid sequence, 322 residues long: Germ cell-specific gene 1-like protein (322 aa).

Topologically, residues 1–8 (MELSRRNR) are cytoplasmic. Residues 9 to 29 (SLLSVVLNLLALSFSVAAFFT) traverse the membrane as a helical segment. The Extracellular segment spans residues 30–125 (SYWCEGTHKV…IELSPDSEKG (96 aa)). A helical membrane pass occupies residues 126-146 (VLWLSVISEFLYIILLSLGFL). Topologically, residues 147 to 166 (LMCLEFFSSSNFIDGLKINA) are cytoplasmic. The chain crosses the membrane as a helical span at residues 167–187 (FAAIITVLSGLLGMVAHMMYM). Topologically, residues 188–209 (TVFQVTVNLGPKDWRPQTWYYG) are extracellular. Residues 210–230 (WSFGLAWLSFTLCMSASVLTL) form a helical membrane-spanning segment. The Cytoplasmic segment spans residues 231–322 (NTYTKTILEF…MDLEDDGDQC (92 aa)).

This sequence belongs to the GSG1 family. As to quaternary structure, component of the AMPAR complex.

The protein resides in the cell membrane. It localises to the synapse. Functionally, as a component of the AMPAR complex, modifies AMPA receptor (AMPAR) gating. This is Germ cell-specific gene 1-like protein (gsg1l) from Xenopus tropicalis (Western clawed frog).